The sequence spans 736 residues: Segment polarity protein dishevelled homolog DVL-2 (736 aa).

The DIX domain occupies 1 to 82 (MAETKVIYHL…RVVSWLASSE (82 aa)). The interval 79–241 (ASSEGSQPDS…PRLERTSSFS (163 aa)) is disordered. A compositionally biased stretch (pro residues) spans 100–114 (EPPPPVPPPIPPPPA). Basic and acidic residues predominate over residues 149–160 (MRRDRVRRRESS). Low complexity predominate over residues 181-195 (ESSSTLLTSEIETSI). The span at 205-217 (SRFSSSTEQSSAS) shows a compositional bias: polar residues. Over residues 219–231 (LLKRHRRRRKQRP) the composition is skewed to basic residues. In terms of domain architecture, PDZ spans 254 to 326 (TVTLNMEKYN…NDDAVRVLRD (73 aa)). Positions 327 to 427 (IVHKPGPIVL…LASVVKVMAS (101 aa)) are interaction with custos. A DEP domain is found at 428 to 502 (PESGLEVRDR…SEQCYYIFGD (75 aa)). Composition is skewed to low complexity over residues 574-593 (MGSA…SNRS) and 616-629 (KSGS…STRS). The tract at residues 574–664 (MGSAGSQHSE…HPPSVHSYAA (91 aa)) is disordered.

This sequence belongs to the DSH family. In terms of assembly, can form homomultimers. Interacts with prickle1. Interacts (via PDZ domain) with ccdc88c/dal and dact1-B/dpr. Interacts (via DIX domain) with ARP/Axin-related protein and dact1-A/frodo. Interacts with sdc4, possibly via fz7. Interacts directly (via DEP domain) with efnb1/ephrin-B1 and indirectly with the phosphorylated ephrin receptors ephb1 and ephb2, via association with SH domain-containing adapters. May interact with lrrc6. Interacts with custos (via NLS1 and NLS2); the interaction is negatively regulated by Wnt stimulation. Post-translationally, phosphorylated. Phosphorylation is controlled by frizzled proteins, correlates with the onset of embryo dorsalizing events and is higher in the dorsal half of early cleavage embryos. Phosphorylated on tyrosine residues in response to association with efnb1/ephrin-B1. Expressed equally in both animal-vegetal and dorsal-ventral directions of the early blastula. Becomes enriched on the dorsal side of the embryo after cortical rotation. Expressed along the anterior margin of eye field of neurulae (stage 16 embryos) and in the anterolateral crescent that borders the eye field. Continues to be expressed in the optic cup at stage 26. Expressed in the central nervous system throughout the early tailbud stage including the entire hindbrain.

It localises to the cytoplasm. Its subcellular location is the cytoplasmic vesicle. The protein localises to the cell projection. The protein resides in the cilium. It is found in the nucleus. It localises to the cell membrane. Functionally, involved in at least 2 independent signaling cascades, controlling cell fate via canonical Wnt signaling and cell polarity via a planar cell polarity (PCP) cascade. Acts synergistically with dal/dapple-like to activate Wnt signaling, stabilizing ctnnb1/beta-catenin and leading to dorsal axis formation. Also prevents degradation of ctnnb1/beta-catenin by displacing gsk3 from a complex with ARP/Axin-related protein. Has an additional role in anterior-posterior (A/P) axis formation, specifying different neuroectodermal cell fates along the A/P axis in a dose-dependent manner by activating several early patterning genes. In the PCP pathway, required at the cell membrane for PCP-mediated neural and mesodermal convergent extension during gastrulation and subsequent neural tube closure, acting to activate jnk. Also involved in blastopore closure and archenteron elongation during early, but not late, gastrulation. Associates with ephrin receptors and ligands and acts as part of a downstream PCP pathway to mediate ephrin-mediated cell repulsion via activation of rhoa. Required for efnb1/ephrin-B1-driven movement of non-retinal progenitor cells into the retina during eye field formation. Patterns the hindbrain. Required for ciliogenesis. Controls the docking of basal bodies to the apical plasma membrane; mediates the activation, but not localization of rhoa at the apical surface of ciliated cells during basal body docking. Furthermore, required for the association of basal bodies with membrane-bound vesicles and the vesicle-trafficking protein exoc4/sec8, and this association is in turn required for basal body docking. Once basal bodies are docked, required for the planar polarization of basal bodies that underlies ciliary beating and the directional fluid flow across ciliated epithelia. This Xenopus laevis (African clawed frog) protein is Segment polarity protein dishevelled homolog DVL-2 (dvl2).